The following is a 402-amino-acid chain: B box and SPRY domain-containing protein (402 aa).

Positions 1-20 (MSAEGAEPGPGSGSGPGPGP) are disordered. Residues 17-65 (GPGPLCPEHGQALSWFCGSERRPVCAACAGLGGRCRGHRIRRAEERAEE) form a B box-type zinc finger. Residues 212-402 (PLLTQLWATA…VADQTISIVR (191 aa)) enclose the B30.2/SPRY domain.

As to quaternary structure, interacts with TRPV5 and TRPV6. Interacts with YWHAZ/14-3-3 protein zeta.

Its subcellular location is the cytoplasm. It localises to the membrane. Functionally, may regulate epithelial calcium transport by inhibiting TRPV5 activity. This chain is B box and SPRY domain-containing protein (BSPRY), found in Homo sapiens (Human).